The primary structure comprises 1031 residues: Beta-galactosidase (1031 aa).

Positions 100 and 198 each coordinate substrate. Residue Asp198 participates in Na(+) binding. Glu412, His414, and Glu457 together coordinate Mg(2+). Substrate is bound by residues Glu457 and 533 to 536; that span reads EYAH. Residue Glu457 is the Proton donor of the active site. The active-site Nucleophile is the Glu533. Asn593 contacts Mg(2+). Na(+) is bound by residues Phe597 and Asn600. Asn600 and Trp1005 together coordinate substrate.

The protein belongs to the glycosyl hydrolase 2 family. As to quaternary structure, homotetramer. Requires Mg(2+) as cofactor. The cofactor is Na(+).

It carries out the reaction Hydrolysis of terminal non-reducing beta-D-galactose residues in beta-D-galactosides.. This is Beta-galactosidase from Vibrio vulnificus (strain YJ016).